A 391-amino-acid chain; its full sequence is FLUCTUATING-LIGHT-ACCLIMATION protein 1, chloroplastic (391 aa).

The transit peptide at 1–48 directs the protein to the chloroplast; sequence MASSSTFLELTPFQWNQPLPYTQRPHHRTVLLYSKPQRRSNSIRLQIS. Residues 87–107 traverse the membrane as a helical segment; sequence AIAAVLLGLLLFYDPNSALAA. Over residues 116 to 138 the composition is skewed to low complexity; it reads SFSSRSRSSSSSSSQSYSVPRTS. The segment at 116 to 140 is disordered; that stretch reads SFSSRSRSSSSSSSQSYSVPRTSNP. The next 2 helical transmembrane spans lie at 168 to 188 and 321 to 341; these read FGFG…AFVL and YIVV…PING.

It belongs to the FLAP family.

Its subcellular location is the plastid. It is found in the chloroplast thylakoid membrane. The protein localises to the chloroplast membrane. The protein resides in the chloroplast envelope. Its function is as follows. Monitors proton H(+) homeostasis in chloroplasts to manipulate luminal acidification levels appropriately to balance photoprotection and photochemical processes. Required during acclimation response to fluctuating light (e.g. photosynthetic activity optimization) by controlling non-photochemical quenching (NPQ); acts independently from DLDG1. The polypeptide is FLUCTUATING-LIGHT-ACCLIMATION protein 1, chloroplastic (Arabidopsis thaliana (Mouse-ear cress)).